The primary structure comprises 198 residues: MVALLAEHTDTNQQAGLLVRPDNHDSLSVAVTATPVVTTTGTPATPPGLELEIQNGDGVGKRAGLPPRRKIETWVKSALYADAALTIRFVDEEEGRTLNRTYRGKDYATNVLTFAYAENEEDPVTGDIVLCCPVVETEAREQRKPLEAHYAHLIVHGVLHAQGYEHEEDAEAEEMEAIETETLQALGYADPYQGDRTV.

Zn(2+)-binding residues include His-156, His-160, and His-166.

The protein belongs to the endoribonuclease YbeY family. It depends on Zn(2+) as a cofactor.

It is found in the cytoplasm. Functionally, single strand-specific metallo-endoribonuclease involved in late-stage 70S ribosome quality control and in maturation of the 3' terminus of the 16S rRNA. This chain is Endoribonuclease YbeY, found in Cupriavidus necator (strain ATCC 17699 / DSM 428 / KCTC 22496 / NCIMB 10442 / H16 / Stanier 337) (Ralstonia eutropha).